The following is a 54-amino-acid chain: Ovomucoid (54 aa).

A Kazal-like domain is found at 4–54; that stretch reads VDCSGYPQSACPQDYVPFCGSDNKTYSNKCNFCNAVADSNGTLTLSHFGKC. Cystine bridges form between C6/C36, C14/C33, and C22/C54. N43 is a glycosylation site (N-linked (GlcNAc...) asparagine).

It is found in the secreted. This is Ovomucoid from Gallirallus australis (Weka).